Consider the following 76-residue polypeptide: Small ribosomal subunit protein bS18 (76 aa).

Belongs to the bacterial ribosomal protein bS18 family. In terms of assembly, part of the 30S ribosomal subunit. Forms a tight heterodimer with protein bS6.

In terms of biological role, binds as a heterodimer with protein bS6 to the central domain of the 16S rRNA, where it helps stabilize the platform of the 30S subunit. The chain is Small ribosomal subunit protein bS18 from Stutzerimonas stutzeri (strain A1501) (Pseudomonas stutzeri).